Reading from the N-terminus, the 247-residue chain is 2,3-bisphosphoglycerate-dependent phosphoglycerate mutase (247 aa).

Residues R9–N16, T22–G23, R61, E88–Y91, K99, R115–R116, and G183–N184 contribute to the substrate site. Residue H10 is the Tele-phosphohistidine intermediate of the active site. The active-site Proton donor/acceptor is the E88.

The protein belongs to the phosphoglycerate mutase family. BPG-dependent PGAM subfamily.

It catalyses the reaction (2R)-2-phosphoglycerate = (2R)-3-phosphoglycerate. It participates in carbohydrate degradation; glycolysis; pyruvate from D-glyceraldehyde 3-phosphate: step 3/5. Functionally, catalyzes the interconversion of 2-phosphoglycerate and 3-phosphoglycerate. The chain is 2,3-bisphosphoglycerate-dependent phosphoglycerate mutase from Nocardioides sp. (strain ATCC BAA-499 / JS614).